The primary structure comprises 260 residues: Imidazole glycerol phosphate synthase subunit HisF (260 aa).

Catalysis depends on residues Asp-12 and Asp-131.

It belongs to the HisA/HisF family. As to quaternary structure, heterodimer of HisH and HisF.

The protein localises to the cytoplasm. It carries out the reaction 5-[(5-phospho-1-deoxy-D-ribulos-1-ylimino)methylamino]-1-(5-phospho-beta-D-ribosyl)imidazole-4-carboxamide + L-glutamine = D-erythro-1-(imidazol-4-yl)glycerol 3-phosphate + 5-amino-1-(5-phospho-beta-D-ribosyl)imidazole-4-carboxamide + L-glutamate + H(+). The protein operates within amino-acid biosynthesis; L-histidine biosynthesis; L-histidine from 5-phospho-alpha-D-ribose 1-diphosphate: step 5/9. Its function is as follows. IGPS catalyzes the conversion of PRFAR and glutamine to IGP, AICAR and glutamate. The HisF subunit catalyzes the cyclization activity that produces IGP and AICAR from PRFAR using the ammonia provided by the HisH subunit. The chain is Imidazole glycerol phosphate synthase subunit HisF from Corynebacterium jeikeium (strain K411).